The sequence spans 122 residues: Large ribosomal subunit protein uL14 (122 aa).

The protein belongs to the universal ribosomal protein uL14 family. In terms of assembly, part of the 50S ribosomal subunit. Forms a cluster with proteins L3 and L19. In the 70S ribosome, L14 and L19 interact and together make contacts with the 16S rRNA in bridges B5 and B8.

Its function is as follows. Binds to 23S rRNA. Forms part of two intersubunit bridges in the 70S ribosome. The chain is Large ribosomal subunit protein uL14 from Methylorubrum populi (strain ATCC BAA-705 / NCIMB 13946 / BJ001) (Methylobacterium populi).